Here is a 194-residue protein sequence, read N- to C-terminus: Bis(5'-nucleosyl)-tetraphosphatase, symmetrical (194 aa).

One can recognise an HD domain in the interval 18 to 132; it reads RYNHSLRVAE…IFIADYIEPG (115 aa). H21 is an ADP binding site. Residues H21, H50, and D51 each coordinate Fe cation. ADP is bound by residues 51–54, H83, 109–110, D127, R133, and 172–177; these read DFCK, HT, and TVYNKT. D127 lines the Fe cation pocket.

It belongs to the Ap4A hydrolase YqeK family. In terms of assembly, homodimer.

The catalysed reaction is P(1),P(4)-bis(5'-adenosyl) tetraphosphate + H2O = 2 ADP + 2 H(+). With respect to regulation, inhibited by EDTA. Hydrolyzes diadenosine 5',5'''-P1,P4-tetraphosphate (Ap4A) to yield ADP. Can also hydrolyze Ap3A, Ap5A, Ap4G, Ap4U and Gp4G, always releasing ADP or GDP as one of the products, but it exhibits a marked preference for Ap4A, which is mainly exerted at the substrate affinity level. The chain is Bis(5'-nucleosyl)-tetraphosphatase, symmetrical from Staphylococcus aureus (strain NCTC 8325 / PS 47).